A 451-amino-acid polypeptide reads, in one-letter code: Cobalamin reductase PduS (451 aa).

4Fe-4S ferredoxin-type domains follow at residues 255–284 (TVLS…HELS) and 300–330 (PQLL…MRIN). The [4Fe-4S] cluster site is built by cysteine 264, cysteine 267, cysteine 270, cysteine 274, cysteine 309, cysteine 312, cysteine 315, and cysteine 320.

Belongs to the PduS cobalamin reductase family. Monomeric when purified anaerobically, dimeric under aerobic conditions. Forms a complex with PduO. Interacts with PduT, probably via the N-terminus of PduS. The cofactor is [4Fe-4S] cluster. Requires FMN as cofactor.

Its subcellular location is the bacterial microcompartment. It functions in the pathway polyol metabolism; 1,2-propanediol degradation. In terms of biological role, a protein that aids in conversion of cob(III)alamin to cob(II)alamin and then to cob(I)alamin in the bacterial microcompartment (BMC) dedicated to 1,2-propanediol (1,2-PD) degradation. The latter step requires PduO. No free cob(I)alamin is released, suggesting a complex is formed with PduO that finishes conversion to adenosylcobalamin. PduS and PduO allow regeneration of the adenosylcobalamin cofactor within the BMC. Another study showed reduction of cob(II)alamin to cob(I)alamin in the absence of PduO. Both reactions require NADH. Cyanocobalamin (CN-Cbl) is not a substrate for the first reaction. Cobalamin reduction probably occurs spontaneously in the presence of free reduced flavin nucleotides, this protein may be involved in electron transfer for this reduction. Its function is as follows. The 1,2-PD-specific bacterial microcompartment (BMC) concentrates low levels of 1,2-PD catabolic enzymes, concentrates volatile reaction intermediates thus enhancing pathway flux and keeps the level of toxic, mutagenic propionaldehyde low. The protein is Cobalamin reductase PduS of Salmonella typhimurium (strain LT2 / SGSC1412 / ATCC 700720).